Reading from the N-terminus, the 224-residue chain is ATP-dependent dethiobiotin synthetase BioD (224 aa).

Thr-18 contributes to the Mg(2+) binding site. Residue Lys-39 is part of the active site. Ser-43 is a binding site for substrate. The Mg(2+) site is built by Asp-56 and Glu-117. ATP contacts are provided by residues Asp-56, 117–120, and 177–178; these read EGVG and NE.

This sequence belongs to the dethiobiotin synthetase family. In terms of assembly, homodimer. It depends on Mg(2+) as a cofactor.

The protein localises to the cytoplasm. It catalyses the reaction (7R,8S)-7,8-diammoniononanoate + CO2 + ATP = (4R,5S)-dethiobiotin + ADP + phosphate + 3 H(+). It functions in the pathway cofactor biosynthesis; biotin biosynthesis; biotin from 7,8-diaminononanoate: step 1/2. Functionally, catalyzes a mechanistically unusual reaction, the ATP-dependent insertion of CO2 between the N7 and N8 nitrogen atoms of 7,8-diaminopelargonic acid (DAPA, also called 7,8-diammoniononanoate) to form a ureido ring. In Xanthomonas oryzae pv. oryzae (strain MAFF 311018), this protein is ATP-dependent dethiobiotin synthetase BioD.